The primary structure comprises 483 residues: ATP synthase subunit beta (483 aa).

169 to 176 (GGAGVGKT) is a binding site for ATP.

The protein belongs to the ATPase alpha/beta chains family. As to quaternary structure, F-type ATPases have 2 components, CF(1) - the catalytic core - and CF(0) - the membrane proton channel. CF(1) has five subunits: alpha(3), beta(3), gamma(1), delta(1), epsilon(1). CF(0) has three main subunits: a(1), b(2) and c(9-12). The alpha and beta chains form an alternating ring which encloses part of the gamma chain. CF(1) is attached to CF(0) by a central stalk formed by the gamma and epsilon chains, while a peripheral stalk is formed by the delta and b chains.

The protein localises to the cell membrane. The catalysed reaction is ATP + H2O + 4 H(+)(in) = ADP + phosphate + 5 H(+)(out). In terms of biological role, produces ATP from ADP in the presence of a proton gradient across the membrane. The catalytic sites are hosted primarily by the beta subunits. The protein is ATP synthase subunit beta of Corynebacterium glutamicum (strain ATCC 13032 / DSM 20300 / JCM 1318 / BCRC 11384 / CCUG 27702 / LMG 3730 / NBRC 12168 / NCIMB 10025 / NRRL B-2784 / 534).